Consider the following 635-residue polypeptide: MAMSLLQDWCRSLDVDAHRALLVTGIPEGLEQADVEAVLQPTLLPLGTFRLRHMKALMNEKAQAALVEFVEDVNHAAIPREIPGKDGVWRVLWKDRAQDTRVLRQMRRLLLDDGPTQAAEAGTPGEAPTPPASETQAQDSGEVTGQAGSLLGAARNPRRGRRGRRNRTRRNRLTQKGKKRSRGGRPSAPARSEAEDSSDESLGIVIEEIDQGDLSGEEDQSALYATLQAAARELVRQWAPCNSEGEEDGPREFLALVTVTDKSKKEEAEKEPAGAESIRLNTKEDKNGVPDLVALLAVRDTPDEEPVDSDTSESDSQESGDQETEELDNPEFVAIVAYTDPSDPWAREEMLKIASVIESLGWSDEKDKRDPLRQVLSVMSKDTNGTRVKVEEAGREVDAVVLRKAGDDGDLRECISTLAQPDLPPQAKKAGRGLFGGWSEHREDEGGLLELVALLAAQDMAEVMKEEKENAWEGGKYKYPKGKLGEVLALLAARENMGSNEGSEEASDEQSEEESEDTESEASEPEDRASRKPRAKRARTAPRGLTPAGAPPTASGARKTRAGGRGRGRGVTPEKKAGSRGSAQDDAAGSRKKKGSAGAGAHARAGEAKGQAPTGSKAARGKKARRGRRLPPKCR.

Disordered stretches follow at residues 115–202, 260–332, and 492–635; these read PTQA…DESL, TDKS…NPEF, and AARE…PKCR. Residues 133–147 are compositionally biased toward polar residues; that stretch reads SETQAQDSGEVTGQA. Positions 156-183 are enriched in basic residues; the sequence is NPRRGRRGRRNRTRRNRLTQKGKKRSRG. The span at 261–273 shows a compositional bias: basic and acidic residues; it reads DKSKKEEAEKEPA. Composition is skewed to acidic residues over residues 302–329 and 502–524; these read PDEE…ELDN and GSEE…EASE. Positions 531–540 are enriched in basic residues; sequence RKPRAKRART. Positions 541 to 557 are enriched in low complexity; the sequence is APRGLTPAGAPPTASGA. 2 stretches are compositionally biased toward basic residues: residues 558–568 and 619–635; these read RKTRAGGRGRG and ARGK…PKCR.

It belongs to the PNMA family.

The protein is Paraneoplastic antigen-like protein 8B of Homo sapiens (Human).